The following is a 356-amino-acid chain: Deoxyribonuclease-2-beta (356 aa).

A signal peptide spans 1 to 22 (MTAQPLKAALPLLFVALSGVLG). Residues Asn77, Asn98, Asn114, and Asn273 are each glycosylated (N-linked (GlcNAc...) asparagine).

This sequence belongs to the DNase II family. As to expression, liver specific.

It is found in the lysosome. The enzyme catalyses Endonucleolytic cleavage to nucleoside 3'-phosphates and 3'-phosphooligonucleotide end-products.. Hydrolyzes DNA under acidic conditions. Does not require divalent cations for activity. Participates in the degradation of nuclear DNA during lens cell differentiation. In Rattus norvegicus (Rat), this protein is Deoxyribonuclease-2-beta (Dnase2b).